A 144-amino-acid chain; its full sequence is Large ribosomal subunit protein uL15 (144 aa).

The segment at 1 to 48 (MQLNNLKPAAGSKHAKRRVGRGIGSGLGKTAGRGHKGQKSRSGGFHKV) is disordered. A compositionally biased stretch (gly residues) spans 21 to 31 (RGIGSGLGKTA).

It belongs to the universal ribosomal protein uL15 family. Part of the 50S ribosomal subunit.

Binds to the 23S rRNA. This Cupriavidus pinatubonensis (strain JMP 134 / LMG 1197) (Cupriavidus necator (strain JMP 134)) protein is Large ribosomal subunit protein uL15.